Reading from the N-terminus, the 526-residue chain is Phosphoenolpyruvate carboxylase (526 aa).

It belongs to the PEPCase type 2 family. As to quaternary structure, homotetramer. The cofactor is Mg(2+).

It carries out the reaction oxaloacetate + phosphate = phosphoenolpyruvate + hydrogencarbonate. Its function is as follows. Catalyzes the irreversible beta-carboxylation of phosphoenolpyruvate (PEP) to form oxaloacetate (OAA), a four-carbon dicarboxylic acid source for the tricarboxylic acid cycle. The protein is Phosphoenolpyruvate carboxylase of Methanosarcina acetivorans (strain ATCC 35395 / DSM 2834 / JCM 12185 / C2A).